Here is a 406-residue protein sequence, read N- to C-terminus: DNA primase DnaG (406 aa).

Residues 169–247 form the Toprim domain; the sequence is PNLIIVEGRA…KIDFVARAPI (79 aa). Positions 175, 220, and 222 each coordinate Mg(2+).

It belongs to the archaeal DnaG primase family. As to quaternary structure, forms a ternary complex with MCM helicase and DNA. Component of the archaeal exosome complex. Interacts with Csl4 but not with Rrp4. It depends on Mg(2+) as a cofactor.

The catalysed reaction is ssDNA + n NTP = ssDNA/pppN(pN)n-1 hybrid + (n-1) diphosphate.. In terms of biological role, RNA polymerase that catalyzes the synthesis of short RNA molecules used as primers for DNA polymerase during DNA replication. Can use NTPs but not dNTPs. Binds DNA. Also part of the exosome, which is a complex involved in RNA degradation. Acts as a poly(A)-binding protein that enhances the interaction between heteromeric, adenine-rich transcripts and the exosome. This Saccharolobus solfataricus (strain ATCC 35092 / DSM 1617 / JCM 11322 / P2) (Sulfolobus solfataricus) protein is DNA primase DnaG.